A 33-amino-acid chain; its full sequence is Dermaseptin DS VIII-like peptide (33 aa).

Ala-33 carries the alanine amide modification.

Expressed by the parotoid glands.

The protein resides in the secreted. In terms of biological role, possesses a potent antimicrobial activity against bacteria, fungi and protozoa. Probably acts by disturbing membrane functions with its amphipathic structure. This Phyllomedusa burmeisteri (Brazilian common walking leaf frog) protein is Dermaseptin DS VIII-like peptide.